A 160-amino-acid chain; its full sequence is Cytochrome c-type biogenesis protein CcmE (160 aa).

Topologically, residues 1-8 are cytoplasmic; the sequence is MSAPRKTR. A helical; Signal-anchor for type II membrane protein transmembrane segment spans residues 9–29; sequence LYAILAVICGAVLTVALTLYA. At 30 to 160 the chain is on the periplasmic side; that stretch reads LSSNIDLFYT…PAAVTEGKRL (131 aa). 2 residues coordinate heme: histidine 130 and tyrosine 134.

It belongs to the CcmE/CycJ family.

It is found in the cell inner membrane. Functionally, heme chaperone required for the biogenesis of c-type cytochromes. Transiently binds heme delivered by CcmC and transfers the heme to apo-cytochromes in a process facilitated by CcmF and CcmH. The protein is Cytochrome c-type biogenesis protein CcmE of Pectobacterium carotovorum subsp. carotovorum (strain PC1).